The following is a 268-amino-acid chain: Unknown seed protein USP (268 aa).

Positions 1–25 (MEFAHLTVLSLFCLAFVGITATSSG) are cleaved as a signal peptide. The 192-residue stretch at 68–259 (LFFEHDLHPG…GNKAAAWVPN (192 aa)) folds into the BURP domain.

As to expression, expressed in seeds. Detected only in the embryo. In germinating seedlings, detected in roots, root caps, root hairs, vascular bundle, mesophyll cells and epidermal cells of the cotyledons and the hypocotyl.

It localises to the golgi apparatus. Its subcellular location is the golgi stack. It is found in the prevacuolar compartment. In terms of biological role, associated with the protein storage vacuole formation. This is Unknown seed protein USP from Vicia faba (Broad bean).